We begin with the raw amino-acid sequence, 86 residues long: Large ribosomal subunit protein bL31B (86 aa).

Belongs to the bacterial ribosomal protein bL31 family. Type B subfamily. Part of the 50S ribosomal subunit.

This is Large ribosomal subunit protein bL31B from Streptococcus agalactiae serotype III (strain NEM316).